A 406-amino-acid polypeptide reads, in one-letter code: Tryptophan synthase beta chain (406 aa).

At Lys99 the chain carries N6-(pyridoxal phosphate)lysine.

The protein belongs to the TrpB family. As to quaternary structure, tetramer of two alpha and two beta chains. It depends on pyridoxal 5'-phosphate as a cofactor.

The catalysed reaction is (1S,2R)-1-C-(indol-3-yl)glycerol 3-phosphate + L-serine = D-glyceraldehyde 3-phosphate + L-tryptophan + H2O. It functions in the pathway amino-acid biosynthesis; L-tryptophan biosynthesis; L-tryptophan from chorismate: step 5/5. Functionally, the beta subunit is responsible for the synthesis of L-tryptophan from indole and L-serine. The sequence is that of Tryptophan synthase beta chain from Rhizobium meliloti (strain 1021) (Ensifer meliloti).